Reading from the N-terminus, the 293-residue chain is Glutamyl-Q tRNA(Asp) synthetase (293 aa).

L-glutamate-binding positions include 8–12 (RFAPS) and E44. A 'HIGH' region motif is present at residues 11 to 21 (PSPSGPLHAGS). Zn(2+) is bound by residues C98, C100, Y120, and C124. 2 residues coordinate L-glutamate: Y183 and R201. The 'KMSKS' region signature appears at 239–243 (KLSKQ). ATP is bound at residue K242.

This sequence belongs to the class-I aminoacyl-tRNA synthetase family. GluQ subfamily. It depends on Zn(2+) as a cofactor.

In terms of biological role, catalyzes the tRNA-independent activation of glutamate in presence of ATP and the subsequent transfer of glutamate onto a tRNA(Asp). Glutamate is transferred on the 2-amino-5-(4,5-dihydroxy-2-cyclopenten-1-yl) moiety of the queuosine in the wobble position of the QUC anticodon. This Janthinobacterium sp. (strain Marseille) (Minibacterium massiliensis) protein is Glutamyl-Q tRNA(Asp) synthetase.